The sequence spans 314 residues: Olfactory receptor 5P6 (314 aa).

Over Met-1–Val-28 the chain is Extracellular. Asn-8 carries an N-linked (GlcNAc...) asparagine glycan. Residues Ile-29–Ile-49 traverse the membrane as a helical segment. At Leu-50–Gln-57 the chain is on the cytoplasmic side. Residues Leu-58–Ser-78 form a helical membrane-spanning segment. The Extracellular segment spans residues Ser-79 to Ile-102. Cys-100 and Cys-192 are oxidised to a cystine. A helical membrane pass occupies residues Gln-103–Tyr-123. The Cytoplasmic segment spans residues Asp-124–Ser-136. Residues Thr-137–Leu-157 form a helical membrane-spanning segment. Topologically, residues Asn-158 to Ala-199 are extracellular. A helical transmembrane segment spans residues Thr-200–Ser-220. Over Tyr-221 to Ala-240 the chain is Cytoplasmic. The chain crosses the membrane as a helical span at residues Phe-241 to Ile-261. The Extracellular segment spans residues Tyr-262–Asn-274. A helical transmembrane segment spans residues Lys-275–Leu-295. The Cytoplasmic portion of the chain corresponds to Arg-296 to Ser-314.

This sequence belongs to the G-protein coupled receptor 1 family.

The protein localises to the cell membrane. Potential odorant receptor. The protein is Olfactory receptor 5P6 of Mus musculus (Mouse).